A 539-amino-acid polypeptide reads, in one-letter code: Phosphoenolpyruvate carboxykinase (ATP) (539 aa).

R64, Y206, and K212 together coordinate substrate. Residues K212, H231, and 247–255 (GLSGTGKTT) each bind ATP. Mn(2+) contacts are provided by K212 and H231. D268 is a Mn(2+) binding site. Residues E296, R332, 448-449 (RI), and T454 contribute to the ATP site. Substrate is bound at residue R332.

Belongs to the phosphoenolpyruvate carboxykinase (ATP) family. Monomer. Mn(2+) is required as a cofactor.

It localises to the cytoplasm. It catalyses the reaction oxaloacetate + ATP = phosphoenolpyruvate + ADP + CO2. Its pathway is carbohydrate biosynthesis; gluconeogenesis. Functionally, involved in the gluconeogenesis. Catalyzes the conversion of oxaloacetate (OAA) to phosphoenolpyruvate (PEP) through direct phosphoryl transfer between the nucleoside triphosphate and OAA. The protein is Phosphoenolpyruvate carboxykinase (ATP) of Salmonella arizonae (strain ATCC BAA-731 / CDC346-86 / RSK2980).